We begin with the raw amino-acid sequence, 185 residues long: GLNDFQKQKIKFTFDFFLDMNHDGSIQDNDFEDMMTRYKEVNKGSLSDADYKSMQASLEDEWRDLKGRADINKDDVVSWEEYLAMWEKTIATCKSVADLPAWCQNRIPFLFKGMDVSGDGIVDLEEFQNYCKNFQLQCADVPAVYNVITDGGKVTFDLNRYKELYYRLLTSPAADAGNTLMGQKP.

EF-hand domains are found at residues 5 to 41 (FQKQKIKFTFDFFLDMNHDGSIQDNDFEDMMTRYKEV), 57 to 92 (SLEDEWRDLKGRADINKDDVVSWEEYLAMWEKTIAT), 102 to 137 (WCQNRIPFLFKGMDVSGDGIVDLEEFQNYCKNFQLQ), and 138 to 173 (CADVPAVYNVITDGGKVTFDLNRYKELYYRLLTSPA). Residues aspartate 19, asparagine 21, aspartate 23, serine 25, aspartate 30, aspartate 70, asparagine 72, aspartate 74, glutamate 81, aspartate 115, serine 117, aspartate 119, and glutamate 126 each contribute to the Ca(2+) site.

Functionally, like parvalbumins, SCPs seem to be more abundant in fast contracting muscles, but no functional relationship can be established from this distribution. The protein is Sarcoplasmic calcium-binding proteins II, V, VI, and VII of Branchiostoma lanceolatum (Common lancelet).